The sequence spans 1475 residues: Mediator of RNA polymerase II transcription subunit 1 (1475 aa).

Positions methionine 1–glycine 10 are enriched in polar residues. Disordered stretches follow at residues methionine 1–glutamine 26, glutamate 616–aspartate 644, glycine 709–glycine 992, glutamine 1135–serine 1166, asparagine 1184–alanine 1245, lysine 1263–histidine 1354, and proline 1387–glutamate 1475. 3 stretches are compositionally biased toward low complexity: residues serine 621 to lysine 641, threonine 711 to lysine 729, and lysine 738 to serine 782. Serine 830, serine 834, serine 854, and serine 858 each carry phosphoserine. 2 stretches are compositionally biased toward polar residues: residues valine 860–lysine 874 and glycine 888–serine 897. Over residues threonine 919–glycine 934 the composition is skewed to low complexity. Pro residues predominate over residues alanine 944–proline 953. Low complexity-rich tracts occupy residues leucine 954–serine 966, serine 973–valine 989, threonine 1143–serine 1159, lysine 1185–threonine 1225, and asparagine 1265–glycine 1276. Positions threonine 1286 to glutamate 1296 are enriched in polar residues. Low complexity-rich tracts occupy residues serine 1334 to serine 1346 and threonine 1399 to serine 1409. 2 stretches are compositionally biased toward polar residues: residues glycine 1415–leucine 1430 and serine 1442–threonine 1458.

It belongs to the Mediator complex subunit 1 family. As to quaternary structure, component of the Mediator complex.

The protein resides in the nucleus. Functionally, component of the Mediator complex, a coactivator involved in the regulated transcription of nearly all RNA polymerase II-dependent genes. Mediator functions as a bridge to convey information from gene-specific regulatory proteins to the basal RNA polymerase II transcription machinery. Mediator is recruited to promoters by direct interactions with regulatory proteins and serves as a scaffold for the assembly of a functional preinitiation complex with RNA polymerase II and the general transcription factors. Required for activated transcription of the MtnA, MtnB and MtnD genes. The sequence is that of Mediator of RNA polymerase II transcription subunit 1 (MED1) from Drosophila melanogaster (Fruit fly).